The primary structure comprises 143 residues: Large ribosomal subunit protein uL13 (143 aa).

The protein belongs to the universal ribosomal protein uL13 family. In terms of assembly, part of the 50S ribosomal subunit.

Functionally, this protein is one of the early assembly proteins of the 50S ribosomal subunit, although it is not seen to bind rRNA by itself. It is important during the early stages of 50S assembly. The polypeptide is Large ribosomal subunit protein uL13 (Thermoanaerobacter pseudethanolicus (strain ATCC 33223 / 39E) (Clostridium thermohydrosulfuricum)).